A 129-amino-acid chain; its full sequence is Chromatin accessibility complex protein 1 (129 aa).

Alanine 2 bears the N-acetylalanine mark. Lysine 102 is subject to N6-acetyllysine. The stretch at 104–120 forms a coiled coil; that stretch reads LKMLKEKREEEEDNEDD. Residues 109–129 are disordered; the sequence is EKREEEEDNEDDGSDLGEALA. Over residues 112 to 123 the composition is skewed to acidic residues; the sequence is EEEEDNEDDGSD. Serine 122 carries the phosphoserine modification.

In terms of assembly, heterodimer with POLE3; binds to DNA. Component of the CHRAC ISWI chromatin remodeling complex at least composed of SMARCA5/SNF2H, BAZ1A/ACF1, CHRAC1 and POLE3; the complex preferentially binds DNA through the CHRAC1-POLE3 heterodimer and possesses ATP-dependent nucleosome-remodeling activity. Within the complex, the heterodimer with POLE3 interacts with SMARCA5/SNF2H; the interaction is direct and enhances nucleosome sliding activity by the SMARCA5/SNF2H and BAZ1A/ACF1 interaction. Within the complex, the heterodimer with POLE3 interacts with BAZ1A/ACF1; the interactions are direct. In terms of tissue distribution, ubiquitously expressed.

The protein localises to the nucleus. In terms of biological role, forms a complex with DNA polymerase epsilon subunit POLE3 and binds naked DNA, which is then incorporated into chromatin, aided by the nucleosome remodeling activity of ISWI/SNF2H and ACF1. Does not enhance nucleosome sliding activity of the ACF-5 ISWI chromatin remodeling complex. This chain is Chromatin accessibility complex protein 1 (Chrac1), found in Mus musculus (Mouse).